A 637-amino-acid polypeptide reads, in one-letter code: Protein kinase domain-containing protein ppk3 (637 aa).

Residues 1–296 (MDFIKSAASF…QLLSSKLEVI (296 aa)) form the Protein kinase domain. Residues 414-450 (KTLNNELLRSLAVVQNDQHPTLRTNSTICLGKIAEYL) form an HEAT repeat. Residues 576-586 (NDTTEIKEKKN) show a composition bias toward basic and acidic residues. The interval 576 to 637 (NDTTEIKEKK…ENNVEESWGL (62 aa)) is disordered. Positions 608 to 631 (ETEEQIDESWMENWNDEEETENNV) are enriched in acidic residues.

It localises to the golgi apparatus. The sequence is that of Protein kinase domain-containing protein ppk3 (ppk3) from Schizosaccharomyces pombe (strain 972 / ATCC 24843) (Fission yeast).